The sequence spans 469 residues: Argininosuccinate lyase (469 aa).

The protein belongs to the lyase 1 family. Argininosuccinate lyase subfamily.

The protein localises to the cytoplasm. The catalysed reaction is 2-(N(omega)-L-arginino)succinate = fumarate + L-arginine. It participates in amino-acid biosynthesis; L-arginine biosynthesis; L-arginine from L-ornithine and carbamoyl phosphate: step 3/3. This is Argininosuccinate lyase from Paracoccus denitrificans (strain Pd 1222).